Reading from the N-terminus, the 337-residue chain is Trace amine-associated receptor 5 (337 aa).

At 1 to 38 (MRAVLLPGSGEQPAAFCYQVNGSCPRTVHPLAIRVLIY) the chain is on the extracellular side. An N-linked (GlcNAc...) asparagine glycan is attached at N21. Disulfide bonds link C24–C188 and C99–C192. The chain crosses the membrane as a helical span at residues 39–59 (LACAVGMLITVLGNLFVVFAV). Over 60-70 (SYFKVLHTPTN) the chain is Cytoplasmic. A helical membrane pass occupies residues 71 to 91 (FLLLSLALADMLLGLLVLPLS). At 92 to 109 (TVRSVESCWFFGDFLCRL) the chain is on the extracellular side. Residues 110 to 130 (HTYLDTLFCLTSIFHLCFISI) form a helical membrane-spanning segment. Residues 131–154 (DRHCAICDPLLYPSKFTVRIALRY) lie on the Cytoplasmic side of the membrane. The chain crosses the membrane as a helical span at residues 155–175 (IAAGWGIPAAYTAFFLYTDVV). Residues 176-189 (ERALSQWLEEMPCV) form an extracellular Loop 2 (ECL2) region. Topologically, residues 176–204 (ERALSQWLEEMPCVGSCQLLFNKFWGWLN) are extracellular. A helical transmembrane segment spans residues 205 to 225 (FPAFFIPCLIMISLYLKIFVV). Residues 226-253 (ATRQAQQIRTLSQSLSGAVKRERKAAKT) lie on the Cytoplasmic side of the membrane. A helical transmembrane segment spans residues 254–274 (LGIAVGIYLVCWLPFTVDTLV). The Extracellular segment spans residues 275–284 (DSLLNFVTPP). The helical transmembrane segment at 285–307 (LVFDIFIWFAYFNSACNPIIYVF) threads the bilayer. Topologically, residues 308–337 (SYRWFRKALKLLLSREILSPRTQTADLFHD) are cytoplasmic.

Belongs to the G-protein coupled receptor 1 family.

Its subcellular location is the cell membrane. In terms of biological role, olfactory receptor specific for trimethylamine, a trace amine enriched in the urine of male rats, playing a role in social behavior. Also activated by N-methylpiperidine. Trimethylamine is present at high concentration in the urine of male after puberty and acts as an attractant. Trimethylamine-binding causes a conformation change that triggers signaling via G(s)-class of G alpha proteins (GNAL or GNAS). Also required to provide olfactory input into limbic brain areas to regulate emotional behaviors likely via modulation of the serotonin system. This is Trace amine-associated receptor 5 from Rattus norvegicus (Rat).